Here is a 114-residue protein sequence, read N- to C-terminus: T cell receptor beta variable 5-5 (114 aa).

The N-terminal stretch at 1-21 is a signal peptide; sequence MGPGLLCWVLLCLLGAGPVDA. The Ig-like domain occupies 22-114; the sequence is GVTQSPTHLI…SALYLCASSL (93 aa). A disulfide bridge connects residues cysteine 42 and cysteine 110. An N-linked (GlcNAc...) asparagine glycan is attached at asparagine 90.

In terms of assembly, alpha-beta TR is a heterodimer composed of an alpha and beta chain; disulfide-linked. The alpha-beta TR is associated with the transmembrane signaling CD3 coreceptor proteins to form the TR-CD3 (TcR or TCR). The assembly of alpha-beta TR heterodimers with CD3 occurs in the endoplasmic reticulum where a single alpha-beta TR heterodimer associates with one CD3D-CD3E heterodimer, one CD3G-CD3E heterodimer and one CD247 homodimer forming a stable octameric structure. CD3D-CD3E and CD3G-CD3E heterodimers preferentially associate with TR alpha and TR beta chains, respectively. The association of the CD247 homodimer is the last step of TcR assembly in the endoplasmic reticulum and is required for transport to the cell surface.

Its subcellular location is the cell membrane. Functionally, v region of the variable domain of T cell receptor (TR) beta chain that participates in the antigen recognition. Alpha-beta T cell receptors are antigen specific receptors which are essential to the immune response and are present on the cell surface of T lymphocytes. Recognize peptide-major histocompatibility (MH) (pMH) complexes that are displayed by antigen presenting cells (APC), a prerequisite for efficient T cell adaptive immunity against pathogens. Binding of alpha-beta TR to pMH complex initiates TR-CD3 clustering on the cell surface and intracellular activation of LCK that phosphorylates the ITAM motifs of CD3G, CD3D, CD3E and CD247 enabling the recruitment of ZAP70. In turn ZAP70 phosphorylates LAT, which recruits numerous signaling molecules to form the LAT signalosome. The LAT signalosome propagates signal branching to three major signaling pathways, the calcium, the mitogen-activated protein kinase (MAPK) kinase and the nuclear factor NF-kappa-B (NF-kB) pathways, leading to the mobilization of transcription factors that are critical for gene expression and essential for T cell growth and differentiation. The T cell repertoire is generated in the thymus, by V-(D)-J rearrangement. This repertoire is then shaped by intrathymic selection events to generate a peripheral T cell pool of self-MH restricted, non-autoaggressive T cells. Post-thymic interaction of alpha-beta TR with the pMH complexes shapes TR structural and functional avidity. The chain is T cell receptor beta variable 5-5 from Homo sapiens (Human).